The sequence spans 90 residues: Probable Fe(2+)-trafficking protein (90 aa).

This sequence belongs to the Fe(2+)-trafficking protein family.

Its function is as follows. Could be a mediator in iron transactions between iron acquisition and iron-requiring processes, such as synthesis and/or repair of Fe-S clusters in biosynthetic enzymes. The polypeptide is Probable Fe(2+)-trafficking protein (Polaromonas sp. (strain JS666 / ATCC BAA-500)).